Reading from the N-terminus, the 461-residue chain is MDYSYDEDLDELCPVCGDKVSGYHYGLLTCESCKGFFKRTVQNNKHYTCTESQSCKIDKTLRKRCPFCRFQKCLTVGMRLEAVRADRMRGGRNKFGPMYKRDRALKQQKKAQIRANGFKLETGPPMGVPPPPPPPPDYMLPPGLHVPEPKGLASGPPAGPLGDFGAPALPMAVPSTNGPLAGYLYPAFPGRAIKSEYPEPYASPPQPGPPYGYPEPFSGGPGVPELILQLLQLEPDEDQVRARIIGCLQEPAKGRPDQPASFNLLCRMADQTFISIVDWARRCMVFKELEVADQMTLLQNCWSELLVFDHIYRQVQHGKEGSTLLVTGQEVELTTVAAQAGSLLHGLVLRAQELVLQMHALQLDRQEFVCLKFLILFSLDVKFLNNHSLVKDAQEKANTALLDYTLCHYPHCGDKFQQLLLCLVEVRALSMQAKEYLYHKHLGNEMPRNNLLIEMLQAKQT.

Positions 10 to 85 (DELCPVCGDK…VGMRLEAVRA (76 aa)) form a DNA-binding region, nuclear receptor. Residues 13–33 (CPVCGDKVSGYHYGLLTCESC) form an NR C4-type zinc finger. An N6-acetyllysine mark is found at Lys34, Lys38, and Lys72. The NR C4-type zinc finger occupies 49–73 (CTESQSCKIDKTLRKRCPFCRFQKC). Residue Lys119 forms a Glycyl lysine isopeptide (Lys-Gly) (interchain with G-Cter in SUMO) linkage. The disordered stretch occupies residues 119-153 (KLETGPPMGVPPPPPPPPDYMLPPGLHVPEPKGLA). Residues 126-139 (MGVPPPPPPPPDYM) are compositionally biased toward pro residues. Residue Lys194 forms a Glycyl lysine isopeptide (Lys-Gly) (interchain with G-Cter in SUMO) linkage. Ser203 is subject to Phosphoserine; by CDK7. Residues 222-459 (GVPELILQLL…NLLIEMLQAK (238 aa)) form the NR LBD domain. The a 1,2-diacyl-sn-glycero-3-phosphocholine site is built by Gly341, Tyr436, and Lys440.

This sequence belongs to the nuclear hormone receptor family. NR5 subfamily. In terms of assembly, binds DNA as a monomer. Part of a complex consisting of SFPQ, NONO and NR5A1. Interacts with NR0B2. Interacts with DGKQ and CDK7. Binds to and activated by HIPK3. Acetylation stimulates the transcriptional activity. Post-translationally, sumoylation reduces CDK7-mediated phosphorylation on Ser-203. In terms of processing, phosphorylated on Ser-203 by CDK7. This phosphorylation promotes transcriptional activity.

The protein localises to the nucleus. Transcriptional activator. Seems to be essential for sexual differentiation and formation of the primary steroidogenic tissues. Binds to the Ad4 site found in the promoter region of steroidogenic P450 genes such as CYP11A, CYP11B and CYP21B. Also regulates the AMH/Muellerian inhibiting substance gene as well as the AHCH and STAR genes. 5'-YCAAGGYC-3' and 5'-RRAGGTCA-3' are the consensus sequences for the recognition by NR5A1. The SFPQ-NONO-NR5A1 complex binds to the CYP17 promoter and regulates basal and cAMP-dependent transcriptional activity. Binds phospholipids with a phosphatidylinositol (PI) headgroup, in particular PI(3,4)P2 and PI(3,4,5)P3. Activated by the phosphorylation of NR5A1 by HIPK3 leading to increased steroidogenic gene expression upon cAMP signaling pathway stimulation. The polypeptide is Steroidogenic factor 1 (NR5A1) (Equus caballus (Horse)).